The following is a 302-amino-acid chain: Coenzyme PQQ synthesis protein B (302 aa).

This sequence belongs to the PqqB family.

It participates in cofactor biosynthesis; pyrroloquinoline quinone biosynthesis. Functionally, may be involved in the transport of PQQ or its precursor to the periplasm. The sequence is that of Coenzyme PQQ synthesis protein B from Azotobacter vinelandii (strain DJ / ATCC BAA-1303).